The sequence spans 714 residues: Stellatatriene synthase (714 aa).

Positions 1-325 are stellata-2,6,19-trien synthase; it reads MEYKFSTVVD…RYNSSGSFSD (325 aa). Residues Asp-92 and Asp-96 each coordinate Mg(2+). The short motif at 92–96 is the DDXXD motif 1 element; the sequence is DDVTD. Residues 276–284 carry the NSE motif motif; the sequence is YLKIVEEYK. The interval 326-713 is geranylgeranyl diphosphate synthase; that stretch reads HQLELMKNGV…LRLIMELLKT (388 aa). A disordered region spans residues 332-356; the sequence is KNGVPKDPASGSTNGTSNGTSNGTS. A compositionally biased stretch (low complexity) spans 341-356; it reads SGSTNGTSNGTSNGTS. Isopentenyl diphosphate-binding residues include Lys-434, Arg-437, and His-466. Positions 473 and 477 each coordinate Mg(2+). The short motif at 473–477 is the DDXXD motif 2 element; that stretch reads DDVED. Arg-482 contacts dimethylallyl diphosphate. Arg-483 is a binding site for isopentenyl diphosphate. Lys-560, Thr-561, Gln-596, Asn-603, Lys-613, and Lys-623 together coordinate dimethylallyl diphosphate.

It in the N-terminal section; belongs to the terpene synthase family. This sequence in the C-terminal section; belongs to the FPP/GGPP synthase family. In terms of assembly, hexamer.

The catalysed reaction is 4 isopentenyl diphosphate + dimethylallyl diphosphate = (2E,6E,10E,14E)-geranylfarnesyl diphosphate + 4 diphosphate. It catalyses the reaction (2E,6E,10E,14E)-geranylfarnesyl diphosphate = stellata-2,6,19-triene + diphosphate. It participates in secondary metabolite biosynthesis; terpenoid biosynthesis. Its function is as follows. Multifunctional diterpene synthase; part of the gene cluster that mediates the biosynthesis of the sesterterpene stellatic acid. The first step in the pathway is performed by the stellatatriene synthase that possesses both prenyl transferase and terpene cyclase activity, converting isopentenyl diphosphate and dimethylallyl diphosphate into geranylgeranyl diphosphate (GGDP) and then converting GGDP into stellata-2,6,19-triene. The cytochrome P450 monooxygenase Stl-P450 then catalyzes three successive oxidation reactions on the C-20 methyl group to generate the carboxylic acid of stellatic acid. This chain is Stellatatriene synthase, found in Emericella variicolor (Aspergillus stellatus).